Here is a 386-residue protein sequence, read N- to C-terminus: Formate-dependent phosphoribosylglycinamide formyltransferase (386 aa).

N(1)-(5-phospho-beta-D-ribosyl)glycinamide is bound by residues 15–16 and E75; that span reads EL. ATP-binding positions include R107, K148, 153-158, 188-191, and E196; these read SSGKGQ and EQFI. The ATP-grasp domain occupies 112-301; it reads ALAVQQLNLQ…EFELHLRAIV (190 aa). Mg(2+)-binding residues include E260 and E272. Residues D279, K349, and 356–357 contribute to the N(1)-(5-phospho-beta-D-ribosyl)glycinamide site; that span reads RR.

It belongs to the PurK/PurT family. In terms of assembly, homodimer.

It catalyses the reaction N(1)-(5-phospho-beta-D-ribosyl)glycinamide + formate + ATP = N(2)-formyl-N(1)-(5-phospho-beta-D-ribosyl)glycinamide + ADP + phosphate + H(+). It functions in the pathway purine metabolism; IMP biosynthesis via de novo pathway; N(2)-formyl-N(1)-(5-phospho-D-ribosyl)glycinamide from N(1)-(5-phospho-D-ribosyl)glycinamide (formate route): step 1/1. In terms of biological role, involved in the de novo purine biosynthesis. Catalyzes the transfer of formate to 5-phospho-ribosyl-glycinamide (GAR), producing 5-phospho-ribosyl-N-formylglycinamide (FGAR). Formate is provided by PurU via hydrolysis of 10-formyl-tetrahydrofolate. The protein is Formate-dependent phosphoribosylglycinamide formyltransferase of Francisella tularensis subsp. holarctica (strain LVS).